Consider the following 361-residue polypeptide: 1D-myo-inositol 2-acetamido-2-deoxy-alpha-D-glucopyranoside deacetylase (361 aa).

Pro residues predominate over residues 1 to 12 (MTTTPQPPPQPD). Residues 1 to 27 (MTTTPQPPPQPDETPEGAAGAATAGRD) form a disordered region. Positions 16-25 (EGAAGAATAG) are enriched in low complexity. Zn(2+)-binding residues include His66, Asp69, and His207.

This sequence belongs to the MshB deacetylase family. The cofactor is Zn(2+).

It carries out the reaction 1D-myo-inositol 2-acetamido-2-deoxy-alpha-D-glucopyranoside + H2O = 1D-myo-inositol 2-amino-2-deoxy-alpha-D-glucopyranoside + acetate. Functionally, catalyzes the deacetylation of 1D-myo-inositol 2-acetamido-2-deoxy-alpha-D-glucopyranoside (GlcNAc-Ins) in the mycothiol biosynthesis pathway. In Kineococcus radiotolerans (strain ATCC BAA-149 / DSM 14245 / SRS30216), this protein is 1D-myo-inositol 2-acetamido-2-deoxy-alpha-D-glucopyranoside deacetylase.